The primary structure comprises 461 residues: Bifunctional protein HldE (461 aa).

Positions 1-312 (MLEFLSQQKP…IRSFKSMSFE (312 aa)) are ribokinase. Position 191–194 (191–194 (NKKE)) interacts with ATP. Asp259 is an active-site residue. The interval 334 to 461 (FTNGCFDIVH…KIIEKIKDKK (128 aa)) is cytidylyltransferase.

In the N-terminal section; belongs to the carbohydrate kinase PfkB family. It in the C-terminal section; belongs to the cytidylyltransferase family. As to quaternary structure, homodimer.

The enzyme catalyses D-glycero-beta-D-manno-heptose 7-phosphate + ATP = D-glycero-beta-D-manno-heptose 1,7-bisphosphate + ADP + H(+). It carries out the reaction D-glycero-beta-D-manno-heptose 1-phosphate + ATP + H(+) = ADP-D-glycero-beta-D-manno-heptose + diphosphate. Its pathway is nucleotide-sugar biosynthesis; ADP-L-glycero-beta-D-manno-heptose biosynthesis; ADP-L-glycero-beta-D-manno-heptose from D-glycero-beta-D-manno-heptose 7-phosphate: step 1/4. It participates in nucleotide-sugar biosynthesis; ADP-L-glycero-beta-D-manno-heptose biosynthesis; ADP-L-glycero-beta-D-manno-heptose from D-glycero-beta-D-manno-heptose 7-phosphate: step 3/4. In terms of biological role, catalyzes the phosphorylation of D-glycero-D-manno-heptose 7-phosphate at the C-1 position to selectively form D-glycero-beta-D-manno-heptose-1,7-bisphosphate. Its function is as follows. Catalyzes the ADP transfer from ATP to D-glycero-beta-D-manno-heptose 1-phosphate, yielding ADP-D-glycero-beta-D-manno-heptose. The polypeptide is Bifunctional protein HldE (Campylobacter jejuni (strain RM1221)).